A 234-amino-acid chain; its full sequence is Peroxiredoxin-2E, chloroplastic (234 aa).

Residues 1–70 (MATSLSVSRF…TRSFATTPVT (70 aa)) constitute a chloroplast transit peptide. A Thioredoxin domain is found at 73 to 234 (ISVGDKLPDS…SSAEDMLKAL (162 aa)). The residue at position 82 (serine 82) is a Phosphoserine. The Cysteine sulfenic acid (-SOH) intermediate role is filled by cysteine 121.

This sequence belongs to the peroxiredoxin family. Prx5 subfamily. In terms of assembly, monomer. In terms of tissue distribution, expressed in all tissues but predominantly in buds, siliques and seeds.

It localises to the plastid. Its subcellular location is the chloroplast stroma. It catalyses the reaction [glutaredoxin]-dithiol + a hydroperoxide = [glutaredoxin]-disulfide + an alcohol + H2O. Functionally, thiol-specific peroxidase that catalyzes the reduction of hydrogen peroxide and organic hydroperoxides to water and alcohols, respectively. Plays a role in cell protection against oxidative stress by detoxifying peroxides. May be involved in chloroplast redox homeostasis. The chain is Peroxiredoxin-2E, chloroplastic (PRXIIE) from Arabidopsis thaliana (Mouse-ear cress).